Here is a 250-residue protein sequence, read N- to C-terminus: Complement factor B-like protease (250 aa).

Sushi domains follow at residues 3 to 73, 74 to 133, and 136 to 193; these read TRCD…KCRA, VWCP…VCDD, and GDCP…QCRA. Disulfide bonds link Cys5/Cys44, Cys30/Cys71, Cys76/Cys118, Cys104/Cys131, Cys138/Cys178, and Cys164/Cys191. Asn115 carries N-linked (GlcNAc...) asparagine glycosylation. A glycan (N-linked (GlcNAc...) asparagine) is linked at Asn221.

Belongs to the peptidase S1 family. Plasma.

Its subcellular location is the secreted. Functionally, required in both the classical and alternate pathways of the complement system. The polypeptide is Complement factor B-like protease (Gallus gallus (Chicken)).